The sequence spans 219 residues: Protein-L-isoaspartate O-methyltransferase (219 aa).

Residue Ser-65 is part of the active site.

It belongs to the methyltransferase superfamily. L-isoaspartyl/D-aspartyl protein methyltransferase family. As to quaternary structure, monomer.

It is found in the cytoplasm. The enzyme catalyses [protein]-L-isoaspartate + S-adenosyl-L-methionine = [protein]-L-isoaspartate alpha-methyl ester + S-adenosyl-L-homocysteine. Catalyzes the methyl esterification of L-isoaspartyl residues in peptides and proteins that result from spontaneous decomposition of normal L-aspartyl and L-asparaginyl residues. It plays a role in the repair and/or degradation of damaged proteins. The chain is Protein-L-isoaspartate O-methyltransferase (pcm) from Pyrococcus furiosus (strain ATCC 43587 / DSM 3638 / JCM 8422 / Vc1).